The chain runs to 490 residues: MKPKLMYQELKVPAEEPASELPMNEIEAWKAAEKKARWVLLVLILAVVGFGALMTQLFLWEYGDLHLFGPNQRPAPCYDPCEAVLVESIPEGLDFPNASTSNPSTSQAWLGLLAGAHSSLDIASFYWTLTNNDTHTQEASAQQGEEVLRQLQTLAPRGVKVRIAVSKPNGPQPQADLQALLQSGAQVRMVDMQKLTHGVLHTKFWVVDQTHFYLGSANMDWRSLTQVKELGVVMYNCSCLARDLTKIFEAYWFLGQAGSSIPSTWPRPYDTRYNQETPMEICLNGTPALAYLASAPPPLCPSGRTPDLKALLNVVDNARSFIYIAVMNYLPIMEFSHPRRFWPAIDDGLRRAAYERGVKVRLLISCWGHSDPSMRAFLLSLAALRDNHTHSDIQVKLFVVPADDAQARIPYARVNHNKYMVTERATYIGTSNWSGSYFTETAGTSLLVTQNGRGGLRSQLEAVFLRDWDSPYSHDLDAAADSVGNACRLL.

The Cytoplasmic portion of the chain corresponds to 1 to 38 (MKPKLMYQELKVPAEEPASELPMNEIEAWKAAEKKARW). Residues 39–59 (VLLVLILAVVGFGALMTQLFL) form a helical; Signal-anchor for type II membrane protein membrane-spanning segment. Over 60–490 (WEYGDLHLFG…DSVGNACRLL (431 aa)) the chain is Lumenal. 2 cysteine pairs are disulfide-bonded: Cys-77-Cys-239 and Cys-81-Cys-237. 2 N-linked (GlcNAc...) asparagine glycosylation sites follow: Asn-97 and Asn-132. One can recognise a PLD phosphodiesterase 1 domain in the interval 196-223 (THGVLHTKFWVVDQTHFYLGSANMDWRS). Catalysis depends on residues His-201, Lys-203, and Asp-208. Residue His-201 is the Proton donor of the active site. Phosphate-binding residues include His-201 and Lys-203. Position 218 (Asn-218) interacts with phosphate. 3 N-linked (GlcNAc...) asparagine glycosylation sites follow: Asn-236, Asn-284, and Asn-387. Cysteines 366 and 487 form a disulfide. Positions 411–437 (YARVNHNKYMVTERATYIGTSNWSGSY) constitute a PLD phosphodiesterase 2 domain. Residue His-416 coordinates phosphate. The Nucleophile role is filled by His-416. Position 438 (Phe-438) interacts with Mg(2+).

This sequence belongs to the phospholipase D family. Homodimer. Interacts with APP. N-glycosylated. In terms of processing, proteolytically processed to a soluble form that is stable within endosomes and lysosomes. During transport through the secretory pathway becomes proteolysed by cysteine proteases, thereby releasing a stable soluble lysosomal lumenal polypeptide, whereas the transmembrane-bound fragment is rapidly degraded. Its transport route to lysosomes involves ubiquitination and the ESCRT complex. Post-translationally, ubiquitinated. Ubiquitination mediates sorting into lysosomes.

It localises to the endoplasmic reticulum membrane. The protein resides in the lysosome lumen. Its subcellular location is the early endosome membrane. It is found in the late endosome membrane. The protein localises to the golgi apparatus membrane. It localises to the endosome membrane. The enzyme catalyses Exonucleolytic cleavage in the 5'- to 3'-direction to yield nucleoside 3'-phosphates.. The catalysed reaction is a 5'-end 5'-dephospho-ribonucleotidyl-ribonucleotide-RNA + H2O = a ribonucleoside 3'-phosphate + a 5'-end dephospho-ribonucleoside-RNA + H(+). It carries out the reaction a ribonucleoside 3'-phosphate-2'-3'-cyclophospho-GMP + H2O = a ribonucleoside 3'-phosphate + 2',3'-cyclophospho-GMP + H(+). It catalyses the reaction a 5'-end 5'-dephospho-2'-deoxyribonucleotidyl-2'-deoxyribonucleotide in single-stranded DNA + H2O = a 5'-end dephospho-2'-deoxyribonucleoside in single-stranded DNA + a 2'-deoxyribonucleoside 3'-phosphate + H(+). The enzyme catalyses a 5'-end 5'-phospho-2'-deoxyribonucleotide in single-stranded DNA + H2O = a 5'-end 5'-dephospho-2'-deoxyribonucleotide in single-stranded DNA + phosphate. The catalysed reaction is a 3-lyso-sn-glycero-1-phospho-(3'-acyl-1'-sn-glycerol) + a 1-acyl-sn-glycerol = a 3-acyl-sn-glycero-1-phospho-(3'-acyl-1'-sn-glycerol) + glycerol. It carries out the reaction 3-lyso-sn-glycero-1-phospho-(3'-(9Z-octadecenoyl)-1'-sn-glycerol) + 1-(9Z-octadecenoyl)-sn-glycerol = 3-(9Z-octadecenoyl)-sn-glycero-1-phospho-(3'-(9Z-octadecenoyl)-1'-sn-glycerol) + glycerol. Functionally, 5'-&gt;3' exonuclease that hydrolyzes the phosphodiester bond of single-stranded DNA (ssDNA) and RNA molecules to form nucleoside 3'-monophosphates and 5'-end 5'-hydroxy deoxyribonucleotide/ribonucleotide fragments. Partially redundant with PLD4, can cleave all four nucleotides displaying higher efficiency for ssDNA and RNA fragments initiated with uridine and guanosine residues and lower efficiency for cytidine-initiated substrates. As a result, it does not always degrade polynucleotides to the single nucleotide level, it can stall at specific sites sparing certain fragments from exonucleolytic degradation. Processes self and pathogenic ssDNA and RNA molecules that reach the endolysosomal compartment via phagocytosis or autophagy and may serve as 'danger' signals for recognition by innate immune receptors such as toll-like receptors (TLRs). Degrades mitochondrial CpG-rich ssDNA fragments to prevent TLR9 activation and autoinflammatory response, but it can cleave viral RNA to generate ligands for TLR7 activation and initiate antiviral immune responses. In plasmacytoid dendritic cells, it cooperates with endonuclease RNASET2 to release 2',3'-cyclic guanosine monophosphate (2',3'-cGMP), a potent stimulatory ligand for TLR7. Produces 2',3'-cGMPs and cytidine-rich RNA fragments that occupy TLR7 ligand-binding pockets and trigger a signaling-competent state. Can exert polynucleotide phosphatase activity toward 5'-phosphorylated ssDNA substrates although at a slow rate. Transphosphatidylase that catalyzes the exchange with R to S stereo-inversion of the glycerol moiety between (S,R)-lysophosphatidylglycerol (LPG) and monoacylglycerol (MAG) substrates to yield (S,S)-bis(monoacylglycero)phosphate (BMP). Can synthesize a variety of (S,S)-BMPs representing the main phospholipid constituent of lysosomal intralumenal vesicle (ILV) membranes that bind acid hydrolases for lipid degradation. Regulates the homeostasis and interorganellar communication of the endolysosomal system with an overall impact on cellular removal of dysfunctional organelles via autophagy as well as proper protein and lipid turnover. May play a role in myotube formation in response to ER stress. In Bos taurus (Bovine), this protein is 5'-3' exonuclease PLD3 (PLD3).